The sequence spans 499 residues: Aldehyde dehydrogenase 1 (499 aa).

NAD(+) contacts are provided by residues isoleucine 164–tryptophan 166, isoleucine 164–asparagine 167, lysine 190–glutamate 193, glycine 223–serine 224, glycine 243–serine 244, glycine 243–glycine 248, and glutamate 266–glycine 268. Residue glutamate 266 is the Proton acceptor of the active site. The active-site Nucleophile is the cysteine 300. Residues glutamine 346 to lysine 350 and glutamate 397 to phenylalanine 399 contribute to the NAD(+) site.

This sequence belongs to the aldehyde dehydrogenase family. Homotetramer. Expressed in flowers and disk florets.

The enzyme catalyses an aldehyde + NAD(+) + H2O = a carboxylate + NADH + 2 H(+). It catalyses the reaction an aldehyde + NADP(+) + H2O = a carboxylate + NADPH + 2 H(+). It carries out the reaction octanal + NADP(+) + H2O = octanoate + NADPH + 2 H(+). The catalysed reaction is (1R,3R)-chrysanthemal + NAD(+) + H2O = (1R,3R)-chrysanthemate + NADH + 2 H(+). The enzyme catalyses (1R,3R)-chrysanthemal + NADP(+) + H2O = (1R,3R)-chrysanthemate + NADPH + 2 H(+). It catalyses the reaction (E)-hept-2-enal + NADP(+) + H2O = (E)-hept-2-enoate + NADPH + 2 H(+). It carries out the reaction dodecanal + NADP(+) + H2O = dodecanoate + NADPH + 2 H(+). The catalysed reaction is citral + NADP(+) + H2O = 3,7-dimethylocta-2,6-dienoate + NADPH + 2 H(+). The enzyme catalyses perillyl aldehyde + NADP(+) + H2O = perillate + NADPH + 2 H(+). It catalyses the reaction (2E,6E)-farnesal + NADP(+) + H2O = (2E,6E)-farnesoate + NADPH + 2 H(+). It carries out the reaction (S)-(-)-citronellal + NADP(+) + H2O = (S)-(-)-citronellate + NADPH + 2 H(+). The protein operates within isoprenoid biosynthesis. Its function is as follows. Component of the monoterpenoid pyrethrins biosynthesis; pyrethrins are widely used plant-derived pesticide. Mediates the conversion of trans-chrysanthemal into trans-chrysanthemic acid. Can also use octanal, hept-2-enal, dodecanal, citral, farnesal, citronellal and perillyl aldehyde as substrates. The polypeptide is Aldehyde dehydrogenase 1 (Tanacetum cinerariifolium (Dalmatian daisy)).